A 435-amino-acid polypeptide reads, in one-letter code: Ras association domain-containing protein 9 (435 aa).

The interval 1–22 (MAPFGRNLLKTRHKNRSPTKDM) is disordered. The 95-residue stretch at 25-119 (EEKEIVVWVC…MQFVLVKTDA (95 aa)) folds into the Ras-associating domain. Residues 195 to 291 (HTIHQQVQRM…KLSAEIEREV (97 aa)) adopt a coiled-coil conformation. The tract at residues 371 to 423 (SKDGCQGKENRGKEAEASSSNGEIPPLTQRVFNTYTNDTDSDTGISSNHSQDS) is disordered. Positions 375-386 (CQGKENRGKEAE) are enriched in basic and acidic residues. Residues 400-423 (RVFNTYTNDTDSDTGISSNHSQDS) show a composition bias toward polar residues.

In terms of assembly, interacts with PAM. In terms of tissue distribution, testis, kidney, skeletal muscle, liver, lung, brain, heart, pituitary gland, adrenal gland and ovary.

The protein resides in the endosome. In terms of biological role, may play a role in regulating vesicuar trafficking in cells. This Rattus norvegicus (Rat) protein is Ras association domain-containing protein 9 (Rassf9).